Consider the following 125-residue polypeptide: Ribonuclease pancreatic (125 aa).

2 residues coordinate substrate: K7 and R10. Residue H12 is the Proton acceptor of the active site. Cystine bridges form between C27–C85, C41–C96, C59–C111, and C66–C73. N35 carries N-linked (GlcNAc...) asparagine glycosylation. Substrate-binding positions include K42–T46, K67, and R86. Residue H120 is the Proton donor of the active site.

Belongs to the pancreatic ribonuclease family. As to quaternary structure, monomer. Interacts with and forms tight 1:1 complexes with RNH1. Dimerization of two such complexes may occur. Interaction with RNH1 inhibits this protein. As to expression, pancreas.

It localises to the secreted. The enzyme catalyses an [RNA] containing cytidine + H2O = an [RNA]-3'-cytidine-3'-phosphate + a 5'-hydroxy-ribonucleotide-3'-[RNA].. It carries out the reaction an [RNA] containing uridine + H2O = an [RNA]-3'-uridine-3'-phosphate + a 5'-hydroxy-ribonucleotide-3'-[RNA].. Functionally, endonuclease that catalyzes the cleavage of RNA on the 3' side of pyrimidine nucleotides. Acts on single-stranded and double-stranded RNA. This is Ribonuclease pancreatic (RNASE1) from Spalax ehrenbergi (Middle East blind mole rat).